We begin with the raw amino-acid sequence, 309 residues long: Protoheme IX farnesyltransferase (309 aa).

The next 9 helical transmembrane spans lie at Ile35–Phe55, Leu64–Ile84, Val114–Val134, Thr135–Ser155, Leu161–Val181, Val187–Leu207, Ile236–Pro256, Phe257–Lys277, and Phe289–Trp309.

Belongs to the UbiA prenyltransferase family. Protoheme IX farnesyltransferase subfamily. Interacts with CtaA.

The protein localises to the cell membrane. It carries out the reaction heme b + (2E,6E)-farnesyl diphosphate + H2O = Fe(II)-heme o + diphosphate. It functions in the pathway porphyrin-containing compound metabolism; heme O biosynthesis; heme O from protoheme: step 1/1. In terms of biological role, converts heme B (protoheme IX) to heme O by substitution of the vinyl group on carbon 2 of heme B porphyrin ring with a hydroxyethyl farnesyl side group. This is Protoheme IX farnesyltransferase from Geobacillus sp. (strain WCH70).